The following is a 338-amino-acid chain: Malate dehydrogenase, mitochondrial (338 aa).

The N-terminal 24 residues, Met1–Asn24, are a transit peptide targeting the mitochondrion. NAD(+)-binding positions include Gly31 to Gly37 and Asp57. A glycan (O-linked (GlcNAc) serine) is linked at Ser33. N6-acetyllysine; alternate occurs at positions 78 and 91. Residues Lys78 and Lys91 each carry the N6-succinyllysine; alternate modification. Substrate is bound by residues Arg104 and Arg110. NAD(+)-binding positions include Asn117 and Ile140 to Asn142. Asn142 is a substrate binding site. The residue at position 165 (Lys165) is an N6-acetyllysine. Arg176 contacts substrate. An N6-acetyllysine; alternate modification is found at Lys185. An N6-succinyllysine; alternate modification is found at Lys185. His200 serves as the catalytic Proton acceptor. At Lys203 the chain carries N6-succinyllysine. An N6-acetyllysine; alternate mark is found at Lys215 and Lys239. N6-succinyllysine; alternate occurs at positions 215 and 239. An N6-malonyllysine; alternate modification is found at Lys239. Ser246 carries the post-translational modification Phosphoserine. Met251 contacts NAD(+). At Lys269 the chain carries N6-succinyllysine. N6-acetyllysine; alternate occurs at positions 296, 301, 307, 314, and 324. Residues Lys296, Lys301, Lys307, Lys314, and Lys324 each carry the N6-succinyllysine; alternate modification. The residue at position 307 (Lys307) is an N6-malonyllysine; alternate. Ser326 bears the Phosphoserine mark. N6-acetyllysine; alternate occurs at positions 328, 329, and 335. An N6-succinyllysine; alternate modification is found at Lys328. Lys329 is subject to N6-malonyllysine; alternate. Lys335 is subject to N6-succinyllysine; alternate.

The protein belongs to the LDH/MDH superfamily. MDH type 1 family. As to quaternary structure, homodimer. Post-translationally, acetylation is enhanced after treatment either with trichostin A (TCA) or with nicotinamide (NAM) with the appearance of tri- and tetraacetylations. Glucose also increases acetylation.

It is found in the mitochondrion matrix. The catalysed reaction is (S)-malate + NAD(+) = oxaloacetate + NADH + H(+). Enzyme activity is enhanced by acetylation. The chain is Malate dehydrogenase, mitochondrial (MDH2) from Sus scrofa (Pig).